Consider the following 213-residue polypeptide: ABA-inducible protein PHV A1 (213 aa).

2 disordered regions span residues 1–158 (MASN…KDKT) and 182–213 (NTLGMGGDNTSATKDATTGATVKDTTTTTRNH). The segment covering 13 to 23 (GETKARTEEKT) has biased composition (basic and acidic residues). 9 LEA 11-mer repeat repeats span residues 27-37 (MGATKQKAGQT), 38-48 (TEATKQKAGET), 49-59 (AEATKQKTGET), 60-70 (AEAAKQKAAEA), 78-88 (AQAAKDKTYET), 89-99 (AQAAKERAAQG), 111-121 (TEAAKQKAAET), 122-132 (TEAAKQKAAEA), and 133-143 (TEAAKQKASDT). Residues 27 to 143 (MGATKQKAGQ…EAAKQKASDT (117 aa)) are 11 X 11 AA tandem repeats of T-E-A-A-K-Q-K-A-A-E-T. Composition is skewed to basic and acidic residues over residues 41–74 (TKQKAGETAEATKQKTGETAEAAKQKAAEAKDKT), 81–98 (AKDKTYETAQAAKERAAQ), and 109–140 (EKTEAAKQKAAETTEAAKQKAAEATEAAKQKA). Low complexity predominate over residues 193–213 (ATKDATTGATVKDTTTTTRNH).

Belongs to the LEA type 4 family.

This Hordeum vulgare (Barley) protein is ABA-inducible protein PHV A1 (HVA1).